The primary structure comprises 693 residues: Polyribonucleotide nucleotidyltransferase (693 aa).

D489 and D495 together coordinate Mg(2+). The KH domain maps to P556 to I615. The S1 motif domain maps to G625 to R693.

Belongs to the polyribonucleotide nucleotidyltransferase family. As to quaternary structure, component of the RNA degradosome, which is a multiprotein complex involved in RNA processing and mRNA degradation. Mg(2+) serves as cofactor.

Its subcellular location is the cytoplasm. It carries out the reaction RNA(n+1) + phosphate = RNA(n) + a ribonucleoside 5'-diphosphate. Functionally, involved in mRNA degradation. Catalyzes the phosphorolysis of single-stranded polyribonucleotides processively in the 3'- to 5'-direction. The chain is Polyribonucleotide nucleotidyltransferase from Francisella tularensis subsp. mediasiatica (strain FSC147).